The primary structure comprises 62 residues: Cryptic Mu-phage protein com (62 aa).

Belongs to the com family.

The protein is Cryptic Mu-phage protein com of Shigella dysenteriae.